The primary structure comprises 104 residues: Flagellar hook-basal body complex protein FliE (104 aa).

Belongs to the FliE family.

It is found in the bacterial flagellum basal body. The chain is Flagellar hook-basal body complex protein FliE from Escherichia coli O6:K15:H31 (strain 536 / UPEC).